A 293-amino-acid chain; its full sequence is 4-diphosphocytidyl-2-C-methyl-D-erythritol kinase (293 aa).

Residue K16 is part of the active site. ATP is bound at residue 99-109 (PMGAGLGGGSS). D141 is a catalytic residue.

It belongs to the GHMP kinase family. IspE subfamily.

It catalyses the reaction 4-CDP-2-C-methyl-D-erythritol + ATP = 4-CDP-2-C-methyl-D-erythritol 2-phosphate + ADP + H(+). The protein operates within isoprenoid biosynthesis; isopentenyl diphosphate biosynthesis via DXP pathway; isopentenyl diphosphate from 1-deoxy-D-xylulose 5-phosphate: step 3/6. Catalyzes the phosphorylation of the position 2 hydroxy group of 4-diphosphocytidyl-2C-methyl-D-erythritol. The chain is 4-diphosphocytidyl-2-C-methyl-D-erythritol kinase from Burkholderia ambifaria (strain MC40-6).